A 1028-amino-acid chain; its full sequence is Isoleucine--tRNA ligase (1028 aa).

A 'HIGH' region motif is present at residues 51–61; sequence PTANGRPHIGH. The 'KMSKS' region motif lies at 591 to 595; it reads KMSKS. Lysine 594 is an ATP binding site.

This sequence belongs to the class-I aminoacyl-tRNA synthetase family. IleS type 2 subfamily. As to quaternary structure, monomer. Zn(2+) serves as cofactor.

It is found in the cytoplasm. It carries out the reaction tRNA(Ile) + L-isoleucine + ATP = L-isoleucyl-tRNA(Ile) + AMP + diphosphate. Its function is as follows. Catalyzes the attachment of isoleucine to tRNA(Ile). As IleRS can inadvertently accommodate and process structurally similar amino acids such as valine, to avoid such errors it has two additional distinct tRNA(Ile)-dependent editing activities. One activity is designated as 'pretransfer' editing and involves the hydrolysis of activated Val-AMP. The other activity is designated 'posttransfer' editing and involves deacylation of mischarged Val-tRNA(Ile). The protein is Isoleucine--tRNA ligase of Thermoplasma volcanium (strain ATCC 51530 / DSM 4299 / JCM 9571 / NBRC 15438 / GSS1).